An 898-amino-acid chain; its full sequence is Serine/threonine-protein kinase TAO3 (898 aa).

Residues 24–277 (FIGLHEIGHG…SAELLRHDFV (254 aa)) form the Protein kinase domain. ATP is bound by residues 30–38 (IGHGSFGAV) and Lys-53. Asp-147 functions as the Proton acceptor in the catalytic mechanism. Disordered regions lie at residues 316–362 (TRNG…SQSS) and 405–425 (DEAGHGDPRPEPRPTQSVQSQ). Ser-324 is subject to Phosphoserine; by ATM. Phosphoserine is present on residues Ser-331, Ser-343, Ser-346, and Ser-349. Polar residues predominate over residues 334–351 (GTSLNREMDSLGSNHSIP). Low complexity predominate over residues 352–362 (SMSVSTGSQSS). Phosphothreonine is present on Thr-357. Ser-359 carries the post-translational modification Phosphoserine. A compositionally biased stretch (basic and acidic residues) spans 405 to 416 (DEAGHGDPRPEP). Position 442 is a phosphoserine (Ser-442). 3 coiled-coil regions span residues 452-502 (EQEN…THAN), 548-649 (FLES…HAML), and 754-879 (LKTL…DMES). The tract at residues 565–596 (EEMNEDHSTPKKEKQERISKHKENLQHTQAEE) is disordered. An N6-acetyllysine modification is found at Lys-830.

This sequence belongs to the protein kinase superfamily. STE Ser/Thr protein kinase family. STE20 subfamily. As to quaternary structure, self-associates. Interacts with ERN1 and TRAF2. Interaction with TRAF2 is facilitated under ER stress conditions, such as treatment with tunicamycin, and may promote TRAF2 phosphorylation. Interacts (via N-terminus) with STK25; the interaction promotes STK25 abundance at the level of protein expression and/or stability. Post-translationally, autophosphorylated. Phosphorylation at Ser-324 by ATM following DNA damage is required for activation of the p38/MAPK14 stress-activated MAPK cascade. Phosphorylated at Ser-324 and on Tyr residues during T cell activation. Phosphorylated by LRRK2.

It is found in the cytoplasm. The protein localises to the cell membrane. Its subcellular location is the membrane raft. The protein resides in the lipid droplet. The enzyme catalyses L-seryl-[protein] + ATP = O-phospho-L-seryl-[protein] + ADP + H(+). It carries out the reaction L-threonyl-[protein] + ATP = O-phospho-L-threonyl-[protein] + ADP + H(+). In terms of biological role, serine/threonine-protein kinase that acts as a regulator of the p38/MAPK14 stress-activated MAPK cascade and of the MAPK8/JNK cascade. In response to DNA damage, involved in the G2/M transition DNA damage checkpoint by activating the p38/MAPK14 stress-activated MAPK cascade, probably by mediating phosphorylation of upstream MAP2K3 and MAP2K6 kinases. Inhibits basal activity of the MAPK8/JNK cascade and diminishes its activation in response to epidermal growth factor (EGF). Positively regulates canonical T cell receptor (TCR) signaling by preventing early PTPN6/SHP1-mediated inactivation of LCK, ensuring sustained TCR signaling that is required for optimal activation and differentiation of T cells. Phosphorylates PTPN6/SHP1 on 'Thr-394', leading to its polyubiquitination and subsequent proteasomal degradation. Required for cell surface expression of metalloprotease ADAM10 on type 1 transitional B cells which is necessary for their NOTCH-mediated development into marginal zone B cells. Also required for the NOTCH-mediated terminal differentiation of splenic conventional type 2 dendritic cells. Positively regulates osteoblast differentiation by acting as an upstream activator of the JNK pathway. Promotes JNK signaling in hepatocytes and positively regulates hepatocyte lipid storage by inhibiting beta-oxidation and triacylglycerol secretion while enhancing lipid synthesis. Restricts age-associated inflammation by negatively regulating differentiation of macrophages and their production of pro-inflammatory cytokines. Plays a role in negatively regulating the abundance of regulatory T cells in white adipose tissue. This chain is Serine/threonine-protein kinase TAO3 (TAOK3), found in Pongo abelii (Sumatran orangutan).